The following is a 293-amino-acid chain: Ribosomal protein L11 methyltransferase (293 aa).

Threonine 145, glycine 166, aspartate 188, and asparagine 230 together coordinate S-adenosyl-L-methionine.

This sequence belongs to the methyltransferase superfamily. PrmA family.

It localises to the cytoplasm. It carries out the reaction L-lysyl-[protein] + 3 S-adenosyl-L-methionine = N(6),N(6),N(6)-trimethyl-L-lysyl-[protein] + 3 S-adenosyl-L-homocysteine + 3 H(+). Its function is as follows. Methylates ribosomal protein L11. The sequence is that of Ribosomal protein L11 methyltransferase from Shewanella frigidimarina (strain NCIMB 400).